Consider the following 388-residue polypeptide: Mannitol-1-phosphate 5-dehydrogenase (388 aa).

Residue 4–15 (AVHFGAGNIGRG) coordinates NAD(+).

It belongs to the mannitol dehydrogenase family.

The enzyme catalyses D-mannitol 1-phosphate + NAD(+) = beta-D-fructose 6-phosphate + NADH + H(+). The chain is Mannitol-1-phosphate 5-dehydrogenase from Thermoanaerobacter pseudethanolicus (strain ATCC 33223 / 39E) (Clostridium thermohydrosulfuricum).